We begin with the raw amino-acid sequence, 206 residues long: dITP/XTP pyrophosphatase (206 aa).

A substrate-binding site is contributed by 7-12 (TSNKDK). The active-site Proton acceptor is the Asp74. Mg(2+) is bound at residue Asp74. Substrate contacts are provided by residues Ser75, 159 to 162 (FGYD), Lys182, and 187 to 188 (HR).

It belongs to the HAM1 NTPase family. Homodimer. Requires Mg(2+) as cofactor.

The catalysed reaction is XTP + H2O = XMP + diphosphate + H(+). It catalyses the reaction dITP + H2O = dIMP + diphosphate + H(+). The enzyme catalyses ITP + H2O = IMP + diphosphate + H(+). Pyrophosphatase that catalyzes the hydrolysis of nucleoside triphosphates to their monophosphate derivatives, with a high preference for the non-canonical purine nucleotides XTP (xanthosine triphosphate), dITP (deoxyinosine triphosphate) and ITP. Seems to function as a house-cleaning enzyme that removes non-canonical purine nucleotides from the nucleotide pool, thus preventing their incorporation into DNA/RNA and avoiding chromosomal lesions. This Campylobacter hominis (strain ATCC BAA-381 / DSM 21671 / CCUG 45161 / LMG 19568 / NCTC 13146 / CH001A) protein is dITP/XTP pyrophosphatase.